Consider the following 174-residue polypeptide: UPF0113 protein APE_0516.1 (174 aa).

Belongs to the UPF0113 family.

This is UPF0113 protein APE_0516.1 from Aeropyrum pernix (strain ATCC 700893 / DSM 11879 / JCM 9820 / NBRC 100138 / K1).